A 106-amino-acid polypeptide reads, in one-letter code: ATP-dependent Clp protease adapter protein ClpS (106 aa).

The protein belongs to the ClpS family. Binds to the N-terminal domain of the chaperone ClpA.

Its function is as follows. Involved in the modulation of the specificity of the ClpAP-mediated ATP-dependent protein degradation. The protein is ATP-dependent Clp protease adapter protein ClpS of Serratia proteamaculans (strain 568).